The primary structure comprises 528 residues: Phosphoenolpyruvate carboxykinase (ATP) (528 aa).

3 residues coordinate substrate: Arg56, Tyr192, and Lys198. Residues Lys198, His217, and 233–241 each bind ATP; that span reads GLSGTGKTT. Residues Lys198 and His217 each coordinate Mn(2+). Position 254 (Asp254) interacts with Mn(2+). Residues Glu282, Arg319, and Thr444 each contribute to the ATP site. Substrate is bound at residue Arg319.

This sequence belongs to the phosphoenolpyruvate carboxykinase (ATP) family. The cofactor is Mn(2+).

The protein resides in the cytoplasm. It carries out the reaction oxaloacetate + ATP = phosphoenolpyruvate + ADP + CO2. It functions in the pathway carbohydrate biosynthesis; gluconeogenesis. Functionally, involved in the gluconeogenesis. Catalyzes the conversion of oxaloacetate (OAA) to phosphoenolpyruvate (PEP) through direct phosphoryl transfer between the nucleoside triphosphate and OAA. In Bacillus cereus (strain G9842), this protein is Phosphoenolpyruvate carboxykinase (ATP).